The chain runs to 133 residues: Large ribosomal subunit protein uL22c (133 aa).

The protein belongs to the universal ribosomal protein uL22 family. Part of the 50S ribosomal subunit.

The protein localises to the plastid. It is found in the chloroplast. In terms of biological role, this protein binds specifically to 23S rRNA. Functionally, the globular domain of the protein is located near the polypeptide exit tunnel on the outside of the subunit, while an extended beta-hairpin is found that lines the wall of the exit tunnel in the center of the 70S ribosome. The sequence is that of Large ribosomal subunit protein uL22c (rpl22) from Manihot esculenta (Cassava).